The following is a 356-amino-acid chain: Protein-L-isoaspartate O-methyltransferase domain-containing protein 1 (356 aa).

Gly-2 carries the N-myristoyl glycine lipid modification. Ser-64 is a catalytic residue. 3 adoMet binding motif regions span residues 85–94 (LNLGSGTGYL), 160–164 (YDRIY), and 181–191 (LKVGGILVMPI). Positions 240 to 250 (VRNLQDLARIY) are BC-box. Positions 299–331 (PLDSEEDEKMEEDKEEEEKEPGEALKPEEPPQN) are disordered. Positions 301 to 318 (DSEEDEKMEEDKEEEEKE) are enriched in acidic residues. Positions 319–331 (PGEALKPEEPPQN) are enriched in basic and acidic residues. Positions 340 to 343 (LPLP) are CUL-box.

It belongs to the methyltransferase superfamily. L-isoaspartyl/D-aspartyl protein methyltransferase family. As to quaternary structure, component of the probable ECS(PCMTD1) E3 ubiquitin-protein ligase complex, at least composed of CUL5, ELOB, ELOC, RBX2 and PCMTD1. Interacts (via the BC-box) with ELOB and ELOC; the interaction is direct and stabilizes PCMTD1.

The protein resides in the cytoplasm. Its subcellular location is the membrane. Functionally, substrate recognition component of an ECS (Elongin BC-CUL5-SOCS-box protein) E3 ubiquitin ligase complex which mediates the ubiquitination and subsequent proteasomal degradation of target proteins. Specifically binds to the methyltransferase cofactor S-adenosylmethionine (AdoMet) via the N-terminal AdoMet binding motif, but does not display methyltransferase activity. May provide an alternate maintenance pathway for modified proteins by acting as a damage-specific E3 ubiquitin ligase adaptor protein. This chain is Protein-L-isoaspartate O-methyltransferase domain-containing protein 1 (PCMTD1), found in Bos taurus (Bovine).